The sequence spans 254 residues: HLA class II histocompatibility antigen, DQ alpha 1 chain (254 aa).

A signal peptide spans 1–23; that stretch reads MILNKALMLGALALTTVMSPCGG. An alpha-1 region spans residues 24–119; that stretch reads EDIVADHVAS…EVPEVTVFSK (96 aa). The Extracellular portion of the chain corresponds to 24 to 216; that stretch reads EDIVADHVAS…IPAPMSELTE (193 aa). 2 N-linked (GlcNAc...) asparagine glycosylation sites follow: asparagine 103 and asparagine 143. The 93-residue stretch at 112-204 folds into the Ig-like C1-type domain; sequence PEVTVFSKSP…LDKPLLKHWE (93 aa). An alpha-2 region spans residues 120–203; sequence SPVTLGQPNI…GLDKPLLKHW (84 aa). A disulfide bridge links cysteine 132 with cysteine 188. A connecting peptide region spans residues 204–216; the sequence is EPEIPAPMSELTE. Residues 217-239 form a helical membrane-spanning segment; that stretch reads TVVCALGLSVGLVGIVVGTVFII. At 240–254 the chain is on the cytoplasmic side; it reads RGLRSVGASRHQGPL.

Belongs to the MHC class II family. Heterodimer of an alpha and a beta subunit; also referred as MHC class II molecule. In the endoplasmic reticulum (ER) it forms a heterononamer; 3 MHC class II molecules bind to a CD74 homotrimer (also known as invariant chain or HLA class II histocompatibility antigen gamma chain). In the endosomal/lysosomal system; CD74 undergoes sequential degradation by various proteases; leaving a small fragment termed CLIP on each MHC class II molecule. MHC class II molecule interacts with HLA_DM, and HLA_DO in B-cells, in order to release CLIP and facilitate the binding of antigenic peptides.

The protein resides in the cell membrane. It localises to the endoplasmic reticulum membrane. The protein localises to the golgi apparatus. It is found in the trans-Golgi network membrane. Its subcellular location is the endosome membrane. The protein resides in the lysosome membrane. In terms of biological role, binds peptides derived from antigens that access the endocytic route of antigen presenting cells (APC) and presents them on the cell surface for recognition by the CD4 T-cells. The peptide binding cleft accommodates peptides of 10-30 residues. The peptides presented by MHC class II molecules are generated mostly by degradation of proteins that access the endocytic route, where they are processed by lysosomal proteases and other hydrolases. Exogenous antigens that have been endocytosed by the APC are thus readily available for presentation via MHC II molecules, and for this reason this antigen presentation pathway is usually referred to as exogenous. As membrane proteins on their way to degradation in lysosomes as part of their normal turn-over are also contained in the endosomal/lysosomal compartments, exogenous antigens must compete with those derived from endogenous components. Autophagy is also a source of endogenous peptides, autophagosomes constitutively fuse with MHC class II loading compartments. In addition to APCs, other cells of the gastrointestinal tract, such as epithelial cells, express MHC class II molecules and CD74 and act as APCs, which is an unusual trait of the GI tract. To produce a MHC class II molecule that presents an antigen, three MHC class II molecules (heterodimers of an alpha and a beta chain) associate with a CD74 trimer in the ER to form a heterononamer. Soon after the entry of this complex into the endosomal/lysosomal system where antigen processing occurs, CD74 undergoes a sequential degradation by various proteases, including CTSS and CTSL, leaving a small fragment termed CLIP (class-II-associated invariant chain peptide). The removal of CLIP is facilitated by HLA-DM via direct binding to the alpha-beta-CLIP complex so that CLIP is released. HLA-DM stabilizes MHC class II molecules until primary high affinity antigenic peptides are bound. The MHC II molecule bound to a peptide is then transported to the cell membrane surface. In B-cells, the interaction between HLA-DM and MHC class II molecules is regulated by HLA-DO. Primary dendritic cells (DCs) also to express HLA-DO. Lysosomal microenvironment has been implicated in the regulation of antigen loading into MHC II molecules, increased acidification produces increased proteolysis and efficient peptide loading. The chain is HLA class II histocompatibility antigen, DQ alpha 1 chain (HLA-DQA1) from Homo sapiens (Human).